We begin with the raw amino-acid sequence, 342 residues long: Nicotinate-nucleotide--dimethylbenzimidazole phosphoribosyltransferase (342 aa).

Residue glutamate 311 is the Proton acceptor of the active site.

The protein belongs to the CobT family.

The catalysed reaction is 5,6-dimethylbenzimidazole + nicotinate beta-D-ribonucleotide = alpha-ribazole 5'-phosphate + nicotinate + H(+). It functions in the pathway nucleoside biosynthesis; alpha-ribazole biosynthesis; alpha-ribazole from 5,6-dimethylbenzimidazole: step 1/2. Catalyzes the synthesis of alpha-ribazole-5'-phosphate from nicotinate mononucleotide (NAMN) and 5,6-dimethylbenzimidazole (DMB). The protein is Nicotinate-nucleotide--dimethylbenzimidazole phosphoribosyltransferase of Photobacterium profundum (strain SS9).